The sequence spans 374 residues: Protein dip1 (374 aa).

The protein belongs to the LDB17 family.

The protein resides in the cytoplasm. The protein localises to the nucleus. It localises to the cell tip. Functionally, may be involved in protein-linked oligosaccharide phosphorylation. This is Protein dip1 (dip1) from Schizosaccharomyces pombe (strain 972 / ATCC 24843) (Fission yeast).